A 109-amino-acid chain; its full sequence is Nucleoid-associated protein HD_0326 (109 aa).

It belongs to the YbaB/EbfC family. As to quaternary structure, homodimer.

Its subcellular location is the cytoplasm. It is found in the nucleoid. In terms of biological role, binds to DNA and alters its conformation. May be involved in regulation of gene expression, nucleoid organization and DNA protection. The protein is Nucleoid-associated protein HD_0326 of Haemophilus ducreyi (strain 35000HP / ATCC 700724).